A 508-amino-acid polypeptide reads, in one-letter code: MGSDSNNLGFLKEIGLGATNIGSFINGQWKANGPTVHSVNPSTNQVIASVTEATLDDYEEGLRASSEAAKTWRTVPAPKRGEIVRQIGDALRAKLDPLGRLVALEMGKILAEGIGEVQEIIDMCDYSVGLSRQLNGSIIPSERPEHMMFEVWNPLGIVGVITAFNFPCAVLGWNACIALVGGNTVVWKGAPTTPLITVAVTKLIAEVFERNNLPGAIFTALCGGADIGHAIAKDTRIPLVSFTGSSKVGALVQQTVSQRFGKTLLELSGNNAIIVMDDADITLAVRSIFFAAVGTAGQRCTTCRRLYLHESVYANVLEQLTALYKQVKIGNPLEEGTLVGPLHTRSAVENFKNGISAIKSQGGKIVTGGSVLESEGNFVVPTIVEISADAAVVKEELFAPVLYVMKFKDLEEAIALNNSVPQGLSSSIFTQKPSTIFKWIGPSGSDCGIVNVNIPTNGAEIGGAFGGEKATGGGREAGSDSWKQYMRRSTCTINYGSELPLAQGINFG.

244 to 249 (GSSKVG) contributes to the NAD(+) binding site. E266 (proton acceptor) is an active-site residue. Residue C300 is the Nucleophile of the active site.

It belongs to the aldehyde dehydrogenase family. In terms of assembly, homotetramer.

The enzyme catalyses an aldehyde + NAD(+) + H2O = a carboxylate + NADH + 2 H(+). The polypeptide is Aldehyde dehydrogenase family 7 member A1 (Pisum sativum (Garden pea)).